The chain runs to 553 residues: Glycerol kinase 3 (553 aa).

A substrate-binding site is contributed by Thr20. Arg24 lines the ATP pocket. Substrate contacts are provided by Arg94, Tyr148, and Asp259. Residues Thr281, Gly326, and 427–431 each bind ATP; that span reads GMTSN.

Belongs to the FGGY kinase family.

The protein localises to the mitochondrion outer membrane. It localises to the cytoplasm. The enzyme catalyses glycerol + ATP = sn-glycerol 3-phosphate + ADP + H(+). Its pathway is polyol metabolism; glycerol degradation via glycerol kinase pathway; sn-glycerol 3-phosphate from glycerol: step 1/1. May be involved in the regulation of glycerol uptake and metabolism. The protein is Glycerol kinase 3 of Homo sapiens (Human).